Consider the following 428-residue polypeptide: 3-phosphoshikimate 1-carboxyvinyltransferase (428 aa).

Residues Lys-22, Ser-23, and Arg-27 each contribute to the 3-phosphoshikimate site. Lys-22 is a binding site for phosphoenolpyruvate. Phosphoenolpyruvate-binding residues include Gly-95 and Arg-123. 6 residues coordinate 3-phosphoshikimate: Ser-170, Ser-171, Gln-172, Ser-197, Asp-316, and Lys-343. Residue Gln-172 participates in phosphoenolpyruvate binding. The Proton acceptor role is filled by Asp-316. Arg-347, Arg-390, and Lys-414 together coordinate phosphoenolpyruvate.

It belongs to the EPSP synthase family. In terms of assembly, monomer.

The protein resides in the cytoplasm. The enzyme catalyses 3-phosphoshikimate + phosphoenolpyruvate = 5-O-(1-carboxyvinyl)-3-phosphoshikimate + phosphate. Its pathway is metabolic intermediate biosynthesis; chorismate biosynthesis; chorismate from D-erythrose 4-phosphate and phosphoenolpyruvate: step 6/7. Functionally, catalyzes the transfer of the enolpyruvyl moiety of phosphoenolpyruvate (PEP) to the 5-hydroxyl of shikimate-3-phosphate (S3P) to produce enolpyruvyl shikimate-3-phosphate and inorganic phosphate. The protein is 3-phosphoshikimate 1-carboxyvinyltransferase of Laribacter hongkongensis (strain HLHK9).